A 79-amino-acid polypeptide reads, in one-letter code: MSNKGQLLQDPFLNALRKEHVPVSIYLVNGIKLQGNIESFDQYVVLLRNTVTQMVYKHAISTVVPARPVNFHPDAEASS.

Residues 10–69 (DPFLNALRKEHVPVSIYLVNGIKLQGNIESFDQYVVLLRNTVTQMVYKHAISTVVPARPV) enclose the Sm domain.

It belongs to the Hfq family. As to quaternary structure, homohexamer.

In terms of biological role, RNA chaperone that binds small regulatory RNA (sRNAs) and mRNAs to facilitate mRNA translational regulation in response to envelope stress, environmental stress and changes in metabolite concentrations. Also binds with high specificity to tRNAs. This chain is RNA-binding protein Hfq, found in Burkholderia cenocepacia (strain HI2424).